The primary structure comprises 249 residues: DNA repair protein RecO (249 aa).

This sequence belongs to the RecO family.

Involved in DNA repair and RecF pathway recombination. This Desulforudis audaxviator (strain MP104C) protein is DNA repair protein RecO.